A 283-amino-acid chain; its full sequence is Protein FAM78A (283 aa).

This sequence belongs to the FAM78 family.

This is Protein FAM78A (Fam78a) from Mus musculus (Mouse).